The sequence spans 411 residues: Imidazolonepropionase (411 aa).

Residues His75 and His77 each coordinate Fe(3+). The Zn(2+) site is built by His75 and His77. Residues Arg84, Tyr147, and His180 each contribute to the 4-imidazolone-5-propanoate site. Tyr147 is a binding site for N-formimidoyl-L-glutamate. His245 lines the Fe(3+) pocket. His245 is a Zn(2+) binding site. Residue Gln248 coordinates 4-imidazolone-5-propanoate. Asp320 is a Fe(3+) binding site. A Zn(2+)-binding site is contributed by Asp320. Residues Asn322 and Gly324 each coordinate N-formimidoyl-L-glutamate. Thr325 lines the 4-imidazolone-5-propanoate pocket.

This sequence belongs to the metallo-dependent hydrolases superfamily. HutI family. The cofactor is Zn(2+). Fe(3+) serves as cofactor.

It localises to the cytoplasm. The enzyme catalyses 4-imidazolone-5-propanoate + H2O = N-formimidoyl-L-glutamate. Its pathway is amino-acid degradation; L-histidine degradation into L-glutamate; N-formimidoyl-L-glutamate from L-histidine: step 3/3. Its function is as follows. Catalyzes the hydrolytic cleavage of the carbon-nitrogen bond in imidazolone-5-propanoate to yield N-formimidoyl-L-glutamate. It is the third step in the universal histidine degradation pathway. The chain is Imidazolonepropionase from Aeromonas salmonicida (strain A449).